We begin with the raw amino-acid sequence, 37 residues long: MIEPLLFGIVLGLIPVTLTGLFVAAYLQYRRGNQFGL.

Residues Leu5–Ala25 traverse the membrane as a helical segment.

The protein belongs to the PetG family. As to quaternary structure, the 4 large subunits of the cytochrome b6-f complex are cytochrome b6, subunit IV (17 kDa polypeptide, PetD), cytochrome f and the Rieske protein, while the 4 small subunits are PetG, PetL, PetM and PetN. The complex functions as a dimer.

The protein resides in the plastid. It localises to the chloroplast thylakoid membrane. Its function is as follows. Component of the cytochrome b6-f complex, which mediates electron transfer between photosystem II (PSII) and photosystem I (PSI), cyclic electron flow around PSI, and state transitions. PetG is required for either the stability or assembly of the cytochrome b6-f complex. The polypeptide is Cytochrome b6-f complex subunit 5 (Guillardia theta (Cryptophyte)).